Here is a 1347-residue protein sequence, read N- to C-terminus: G-protein coupled receptor-associated sorting protein 1 (1347 aa).

3 disordered regions span residues 1–75 (MTRA…AYAK), 145–174 (ESIP…SWYR), and 188–281 (DFKW…NSRS). The span at 21–33 (ENANAAEVEPEAP) shows a compositional bias: low complexity. Over residues 211 to 226 (FRPRKSMKANNRFRHM) the composition is skewed to basic residues. Residues 263–278 (PKDKTKVWSKPKEEPN) show a composition bias toward basic and acidic residues. Ser295 is modified (phosphoserine). Disordered stretches follow at residues 310–344 (GEEA…AMSG), 364–396 (FSKS…QEAR), and 460–485 (QVSS…SKSM). Basic residues predominate over residues 316–325 (RSKPRARKGV). Over residues 370-396 (KKEPRTRAVPKEEVKTKARASTKQEAR) the composition is skewed to basic and acidic residues. The segment covering 461–484 (VSSFCLGSGKKSSMESGPKATSKS) has biased composition (polar residues). Ser619 and Ser626 each carry phosphoserine. At Thr860 the chain carries Phosphothreonine. At Ser862 the chain carries Phosphoserine.

It belongs to the GPRASP family. In terms of assembly, interacts with cytoplasmic tails of a variety of G-protein coupled receptors such as delta opioid receptor/OPRD1, beta-2 adrenergic receptor/ADRB2 and D4 dopamine receptor/DRD4 as well as D2 dopamine receptor/DRD2. Interacts with PER1. Interacts with BECN2; the interaction is direct. In terms of tissue distribution, expressed in the brain, with higher expression in the hippocampus, hypothalamus and olfactory bulb.

It localises to the cytoplasm. Modulates lysosomal sorting and functional down-regulation of a variety of G-protein coupled receptors. Targets receptors for degradation in lysosomes via its interaction with BECN2. This is G-protein coupled receptor-associated sorting protein 1 (Gprasp1) from Mus musculus (Mouse).